Here is a 238-residue protein sequence, read N- to C-terminus: Aspartate/glutamate leucyltransferase (238 aa).

The protein belongs to the R-transferase family. Bpt subfamily.

It localises to the cytoplasm. It catalyses the reaction N-terminal L-glutamyl-[protein] + L-leucyl-tRNA(Leu) = N-terminal L-leucyl-L-glutamyl-[protein] + tRNA(Leu) + H(+). The enzyme catalyses N-terminal L-aspartyl-[protein] + L-leucyl-tRNA(Leu) = N-terminal L-leucyl-L-aspartyl-[protein] + tRNA(Leu) + H(+). Functions in the N-end rule pathway of protein degradation where it conjugates Leu from its aminoacyl-tRNA to the N-termini of proteins containing an N-terminal aspartate or glutamate. The chain is Aspartate/glutamate leucyltransferase from Nitrosococcus oceani (strain ATCC 19707 / BCRC 17464 / JCM 30415 / NCIMB 11848 / C-107).